The following is a 641-amino-acid chain: Epstein-Barr nuclear antigen 1 (641 aa).

The span at 1 to 14 (MSDEGPGTGPGNGL) shows a compositional bias: gly residues. 2 disordered regions span residues 1-124 (MSDE…AGGA) and 168-478 (GAGA…NPKF). The span at 41 to 50 (RGRGRGRGRG) shows a compositional bias: basic residues. Gly residues-rich tracts occupy residues 51–62 (GGRPGAPGGSGS), 84–124 (GAHG…AGGA), and 168–352 (GAGA…GSGG). The interaction with host C1QBP/P32 stretch occupies residues 325–376 (GGGGRGRGGSGGRGRGGSGGRGRGGSGGRRGRGRERARGRSRERARGRGRGR). The segment at 328-378 (GRGRGGSGGRGRGGSGGRGRGGSGGRRGRGRERARGRSRERARGRGRGRGE) is chromosome-tethering GR2. Residues 358-381 (RERARGRSRERARGRGRGRGEKRP) show a composition bias toward basic and acidic residues. The segment at 379 to 386 (KRPRSPSS) is nuclear localization signal. A compositionally biased stretch (low complexity) spans 383-394 (SPSSQSSSSGSP). A phosphoserine mark is found at S385 and S393. Residues 387–395 (QSSSSGSPP) are interaction with host CSNK2B. Residues 436–450 (QGPTDDPGEGPSTGP) are interaction with host USP7. The segment at 452–607 (GQGDGGRRKK…CSFDDGVDLP (156 aa)) is DBD/DD. Residues 458–470 (RRKKGGWFGKHRG) show a composition bias toward basic residues. 3 residues coordinate DNA: K460, K461, and Y518. The active-site For site-specific DNA cleavage activity is Y518. The segment at 612 to 641 (PMVEGAAAEGDDGDDGDEGGDGDEGEEGQE) is disordered. The segment covering 620-641 (EGDDGDDGDEGGDGDEGEEGQE) has biased composition (acidic residues).

The protein belongs to the herpesviridae EBNA1 family. As to quaternary structure, homodimer. Dimers can assemble into higher-order oligomers like a homohexamer. Binding to the DS element involves 2 dimers of EBNA1. Interacts with human USP7; this interaction is independent and simultaneous to EBNA1 interaction with CSNK2B as well as necessary for PML nuclear bodies disruption by EBNA1. Interacts with host CSNK2B (via KSSR motif); the interaction requires phosphorylation of EBNA1, is independent and simultaneous to EBNA1 interaction with USP7 as well as necessary for PML nuclear bodies disruption by EBNA1. EBNA1, USP7 and CSNK2B form a ternary complex. EBNA1, USP7 and CSNK2B form a ternary complex. Interacts with human EBP2; it is not clear if this interaction is linked with the ability of EBNA1 to associate with host mitotic chromosomes. Interacts with BGLF4; this interaction facilitates the switch from latent to lytic DNA replication by down-regulating EBNA1 replication function. Interacts with human PAX5; this interaction promotes EBNA1-dependent transcription. Interacts with host KPNA1/Importin subunit alpha-5; this interaction allows the nuclear import of EBNA1. Interacts with host KPNA2/Importin subunit alpha-1; this interaction allows the nuclear import of EBNA1. Interacts with host C1QBP/P32. Interacts with host BIRC5/Survivin; this interaction is probably important for EBV episome maintenance in Burkitt's lymphoma host cells. Post-translationally, phosphorylation at Ser-385 increases the nuclear import efficiency of EBNA1. Phosphorylation at Ser-393 is required for interaction with CSNK2B.

Its subcellular location is the host nucleus. Responsible for the origin of replication (oriP) dependent replication and maintenance of viral episomes during latent infection. EBNA1 dimer interacts with the DS (dyad symmetry) element within the origin of replication oriP and with a host mitotic chromosome to initiate viral DNA replication during latency. EBNA1 binding to DS recruits the host origin recognition complex (ORC). Governs the faithful mitotic segregation of the viral episomes by binding both the FR (family of repeats) element within oriP and the host mitotic chromosomes. Forms a cell cycle-dependent tyrosine-dependent DNA cross-link and single-strand cleavage at oriP required for terminating replication and maintaining viral episomes. Counteracts the stabilization of host p53/TP53 by host USP7, thereby decreasing apoptosis and increasing host cell survival. Induces degradation of host PML through the ubiquitin-proteasome system, which promotes lytic reactivation and may impair the host cell DNA repair. Increases the association of CK2 with PML proteins which increases the phosphorylation of PML proteins by CK2, triggering the polyubiquitylation and degradation of PML. Displays inhibitory effects on a SUMO2-modified complex that includes STUB1, KAP1 and USP7. This inhibitory effect possibly participates to the maintenance of latency linked to PML silencing. This chain is Epstein-Barr nuclear antigen 1 (EBNA1), found in Epstein-Barr virus (strain GD1) (HHV-4).